Here is a 64-residue protein sequence, read N- to C-terminus: MMFKLGVLLTICLLLFPLTALQLDWDQPGDHMLDISSEIDDRWFDPVRKCCMRPICMCPCCIGP.

Residues 1–20 form the signal peptide; it reads MMFKLGVLLTICLLLFPLTA. Positions 21–48 are excised as a propeptide; it reads LQLDWDQPGDHMLDISSEIDDRWFDPVR. Intrachain disulfides connect C50-C60, C51-C58, and C56-C61. Residue P59 is modified to 4-hydroxyproline.

In terms of tissue distribution, expressed by the venom duct.

It is found in the secreted. This chain is Conotoxin reg3k, found in Conus regius (Crown cone).